A 281-amino-acid polypeptide reads, in one-letter code: Tumor necrosis factor ligand superfamily member 6 (281 aa).

At methionine 1–glycine 80 the chain is on the cytoplasmic side. The segment at serine 20–leucine 71 is disordered. A compositionally biased stretch (pro residues) spans arginine 43–proline 70. The chain crosses the membrane as a helical; Signal-anchor for type II membrane protein span at residues leucine 81–phenylalanine 102. The Extracellular segment spans residues glutamine 103 to leucine 281. The span at threonine 118–glutamate 128 shows a compositional bias: polar residues. The disordered stretch occupies residues threonine 118–glutamate 142. The region spanning lysine 145–leucine 281 is the THD domain. An N-linked (GlcNAc...) asparagine glycan is attached at asparagine 184. A disulfide bond links cysteine 202 and cysteine 233. N-linked (GlcNAc...) asparagine glycosylation is found at asparagine 250 and asparagine 260.

The protein belongs to the tumor necrosis factor family. As to quaternary structure, homotrimer. Interacts with ARHGAP9, BAIAP2L1, BTK, CACNB3, CACNB4, CRK, DLG2, DNMBP, DOCK4, EPS8L3, FGR, FYB1, FYN, HCK, ITK, ITSN2, KALRN, LYN, MACC1, MIA, MPP4, MYO15A, NCF1, NCK1, NCK2, NCKIPSD, OSTF1, PIK3R1, PSTPIP1, RIMBP3C, SAMSN1, SH3GL3, SH3PXD2B, SH3PXD2A, SH3RF2, SKAP2, SNX33, SNX9, SORBS3, SPTA1, SRC, SRGAP1, SRGAP2, SRGAP3, TEC, TJP3 and YES1. Post-translationally, the soluble form derives from the membrane form by proteolytic processing. The membrane-bound form undergoes two successive intramembrane proteolytic cleavages. The first one is processed by ADAM10 producing an N-terminal fragment, which lacks the receptor-binding extracellular domain. This ADAM10-processed FasL (FasL APL) remnant form is still membrane anchored and further processed by SPPL2A that liberates the FasL intracellular domain (FasL ICD). FasL shedding by ADAM10 is a prerequisite for subsequent intramembrane cleavage by SPPL2A in T-cells. In terms of processing, N-glycosylated. Glycosylation enhances apoptotic activity. Phosphorylated by FGR on tyrosine residues; this is required for ubiquitination and subsequent internalization. Post-translationally, monoubiquitinated.

It localises to the cell membrane. The protein localises to the cytoplasmic vesicle lumen. Its subcellular location is the lysosome lumen. The protein resides in the secreted. It is found in the nucleus. In terms of biological role, cytokine that binds to TNFRSF6/FAS, a receptor that transduces the apoptotic signal into cells. Involved in cytotoxic T-cell-mediated apoptosis, natural killer cell-mediated apoptosis and in T-cell development. Initiates fratricidal/suicidal activation-induced cell death (AICD) in antigen-activated T-cells contributing to the termination of immune responses. TNFRSF6/FAS-mediated apoptosis also has a role in the induction of peripheral tolerance. Binds to TNFRSF6B/DcR3, a decoy receptor that blocks apoptosis. Its function is as follows. Induces FAS-mediated activation of NF-kappa-B, initiating non-apoptotic signaling pathways. Can induce apoptosis but does not appear to be essential for this process. Functionally, cytoplasmic form induces gene transcription inhibition. The protein is Tumor necrosis factor ligand superfamily member 6 (FASLG) of Homo sapiens (Human).